The chain runs to 147 residues: 3-dehydroquinate dehydratase (147 aa).

Tyr24 functions as the Proton acceptor in the catalytic mechanism. Residues Asn73, His79, and Asp86 each contribute to the substrate site. Residue His99 is the Proton donor of the active site. Substrate contacts are provided by residues 100–101 (LS) and Arg110.

The protein belongs to the type-II 3-dehydroquinase family. As to quaternary structure, homododecamer.

The catalysed reaction is 3-dehydroquinate = 3-dehydroshikimate + H2O. It participates in metabolic intermediate biosynthesis; chorismate biosynthesis; chorismate from D-erythrose 4-phosphate and phosphoenolpyruvate: step 3/7. Its function is as follows. Catalyzes a trans-dehydration via an enolate intermediate. The polypeptide is 3-dehydroquinate dehydratase (Hyphomonas neptunium (strain ATCC 15444)).